Reading from the N-terminus, the 372-residue chain is MHC class I-like protein MILL2 (372 aa).

The signal sequence occupies residues 1–26; it reads MEASSGTAGPAVLLLILALLLTESQG. Positions 28 to 119 are alpha-1; that stretch reads RSQGTHTLRY…MINQKGHDKG (92 aa). 3 disulfides stabilise this stretch: cysteine 78–cysteine 89, cysteine 129–cysteine 191, and cysteine 230–cysteine 287. The segment at 120–210 is alpha-2; that stretch reads PYTLQATLDC…SLSNVLPDTG (91 aa). N-linked (GlcNAc...) asparagine glycans are attached at residues asparagine 134, asparagine 234, and asparagine 293. The region spanning 192-302 is the Ig-like C1-type domain; it reads PARLQRHLAS…NRTIMQTAVS (111 aa). The segment at 211–339 is alpha-3; it reads SPVVIVTCRN…VVDGGLVTGN (129 aa). The interval 308–349 is disordered; it reads WPSASWATRQEAEGPHRTHNDHVVDGGLVTGNANKDSPDASS. Residues 317-331 show a composition bias toward basic and acidic residues; it reads QEAEGPHRTHNDHVV. The segment at 340–348 is connecting peptide; it reads ANKDSPDAS. Serine 349 is lipidated: GPI-anchor amidated serine. The propeptide at 350–372 is removed in mature form; that stretch reads CATASAISAFPVVVLSVALPRAN.

Belongs to the MHC class I family. Heterodimer with B2M. In terms of tissue distribution, ubiquitously expressed in neonatal and adult tissues.

The protein localises to the cell membrane. Its function is as follows. Binds to heparan sulfate proteoglycans on the surface of fibroblast cells. In Rattus norvegicus (Rat), this protein is MHC class I-like protein MILL2.